The chain runs to 455 residues: Serine--tRNA ligase (455 aa).

Residue 252–254 (TAE) coordinates L-serine. Residues 283–285 (RKE) and valine 299 contribute to the ATP site. Glutamate 306 contacts L-serine. 370-373 (EVVS) contributes to the ATP binding site. Threonine 406 is an L-serine binding site.

It belongs to the class-II aminoacyl-tRNA synthetase family. Type-1 seryl-tRNA synthetase subfamily. As to quaternary structure, homodimer. The tRNA molecule binds across the dimer.

The protein localises to the cytoplasm. The enzyme catalyses tRNA(Ser) + L-serine + ATP = L-seryl-tRNA(Ser) + AMP + diphosphate + H(+). It carries out the reaction tRNA(Sec) + L-serine + ATP = L-seryl-tRNA(Sec) + AMP + diphosphate + H(+). It functions in the pathway aminoacyl-tRNA biosynthesis; selenocysteinyl-tRNA(Sec) biosynthesis; L-seryl-tRNA(Sec) from L-serine and tRNA(Sec): step 1/1. Functionally, catalyzes the attachment of serine to tRNA(Ser). Is also able to aminoacylate tRNA(Sec) with serine, to form the misacylated tRNA L-seryl-tRNA(Sec), which will be further converted into selenocysteinyl-tRNA(Sec). The protein is Serine--tRNA ligase of Pyrococcus furiosus (strain ATCC 43587 / DSM 3638 / JCM 8422 / Vc1).